We begin with the raw amino-acid sequence, 562 residues long: Putative transport protein ETA_21820 (562 aa).

5 helical membrane-spanning segments follow: residues 8-28 (LLIGNHILLLFVVLALGLCLG), 32-52 (LGSVQLGNSIGVLVVSLLLGQ), 66-86 (FMLFIFCVGVEAGPNFFSIFF), 94-114 (MLAIVMVSSAMVLALGLGKLF), and 158-178 (HLSLGYALTYLVGLVSLIFGA). 2 consecutive RCK C-terminal domains span residues 202–288 (LDPD…SFRN) and 290–373 (KEVF…RIGF). A run of 6 helical transmembrane segments spans residues 383–403 (LLAFCAFFILGLMIGMITFQF), 406–426 (FNFGIGNAAGLLFAGIMLGFL), 440–460 (ALTMVKEFGLMVFMAGVGLSA), 473–493 (LLMLGAGLIVSLVPVVICFLF), 503–523 (ALLFGAIMGARTCAPAMEIIS), and 540–560 (AIANVLLTLAGTLIVIIWPIL).

It belongs to the AAE transporter (TC 2.A.81) family. YbjL subfamily.

Its subcellular location is the cell membrane. This Erwinia tasmaniensis (strain DSM 17950 / CFBP 7177 / CIP 109463 / NCPPB 4357 / Et1/99) protein is Putative transport protein ETA_21820.